We begin with the raw amino-acid sequence, 393 residues long: Putative amino-acid ABC transporter permease protein YhdX (393 aa).

The next 8 helical transmembrane spans lie at 21 to 41 (AWLFQILAVVAVVGIVGWLFH), 92 to 112 (LLVSALCIVFASVLGFFIGLA), 128 to 148 (IEIFRNIPPLLQIFFWYFAVL), 180 to 200 (DGFIAFILAVVMAIVLSVGLF), 219 to 239 (IAAVLIIGLPLLAQWLFGAAL), 256 to 276 (VLIPELAALTLALSVYTSAFI), 333 to 353 (SSLAAAIGYPDMVSLFAGTVL), and 363 to 383 (IAMTMSVYLIISLTISLLMNI). An ABC transmembrane type-1 domain is found at 88–381 (LLNTLLVSAL…IISLTISLLM (294 aa)).

It belongs to the binding-protein-dependent transport system permease family. HisMQ subfamily.

The protein localises to the cell inner membrane. Functionally, probably part of the binding-protein-dependent transport system YdhWXYZ for an amino acid; probably responsible for the translocation of the substrate across the membrane. This Escherichia coli (strain K12) protein is Putative amino-acid ABC transporter permease protein YhdX (yhdX).